We begin with the raw amino-acid sequence, 268 residues long: Undecaprenyl-diphosphatase (268 aa).

7 consecutive transmembrane segments (helical) span residues 47–67, 83–103, 109–129, 144–164, 184–204, 217–237, and 246–266; these read FTILIQLGAILAILALYFAKL, FVIGVLVAFLPAAVIGALAGG, LFNPWVVCFSLIVGGAILLWV, FPLPMYLYIGCAQCLAMIPGV, AAEFSFFLAIPTMVGAFVYDL, LIVAIGFAVSFVTAIIVVKSF, and FTLFAWWRVIVGTLGLIALAL.

It belongs to the UppP family.

It is found in the cell inner membrane. It carries out the reaction di-trans,octa-cis-undecaprenyl diphosphate + H2O = di-trans,octa-cis-undecaprenyl phosphate + phosphate + H(+). Functionally, catalyzes the dephosphorylation of undecaprenyl diphosphate (UPP). Confers resistance to bacitracin. The chain is Undecaprenyl-diphosphatase from Rhodopseudomonas palustris (strain BisB18).